A 647-amino-acid polypeptide reads, in one-letter code: Macrolide export ATP-binding/permease protein MacB (647 aa).

Positions 7–245 constitute an ABC transporter domain; that stretch reads IRLEDICKTF…EATLQPHEEI (239 aa). 43–50 contacts ATP; that stretch reads GASGSGKS. A run of 4 helical transmembrane segments spans residues 274–294, 529–549, 573–593, and 610–630; these read VLTL…LAIG, VAAI…LVSV, FIIE…ILGL, and FGPV…FGFL.

This sequence belongs to the ABC transporter superfamily. Macrolide exporter (TC 3.A.1.122) family. As to quaternary structure, homodimer.

The protein localises to the cell inner membrane. In terms of biological role, non-canonical ABC transporter that contains transmembrane domains (TMD), which form a pore in the inner membrane, and an ATP-binding domain (NBD), which is responsible for energy generation. Confers resistance against macrolides. This is Macrolide export ATP-binding/permease protein MacB from Brucella melitensis biotype 1 (strain ATCC 23456 / CCUG 17765 / NCTC 10094 / 16M).